The chain runs to 264 residues: Zinc transporter ZupT (264 aa).

The next 5 membrane-spanning stretches (helical) occupy residues Ala-8–Val-28, Phe-36–Ile-56, Trp-75–Ile-95, Gly-121–Ile-141, and Ser-148–Val-168. Asn-132 and Glu-135 together coordinate Fe(2+). Zn(2+)-binding residues include Glu-135 and His-160. Asn-161, Glu-164, and Glu-193 together coordinate Fe(2+). Glu-164 serves as a coordination point for Zn(2+). Helical transmembrane passes span Ala-197–Phe-217, Ala-219–Tyr-239, and Leu-244–Ile-264.

It belongs to the ZIP transporter (TC 2.A.5) family. ZupT subfamily.

It is found in the cell membrane. It catalyses the reaction Zn(2+)(in) = Zn(2+)(out). Its function is as follows. Mediates zinc uptake. May also transport other divalent cations. The protein is Zinc transporter ZupT of Streptococcus mutans serotype c (strain ATCC 700610 / UA159).